The chain runs to 177 residues: Small ribosomal subunit protein uS4 (177 aa).

One can recognise an S4 RNA-binding domain in the interval 104–166 (RRLQTIVYKK…PTSPFKQHPP (63 aa)). The disordered stretch occupies residues 158–177 (TSPFKQHPPTQQGEENVQQA). Positions 165–177 (PPTQQGEENVQQA) are enriched in polar residues.

It belongs to the universal ribosomal protein uS4 family. As to quaternary structure, part of the 30S ribosomal subunit. Contacts protein S5. The interaction surface between S4 and S5 is involved in control of translational fidelity.

Its function is as follows. One of the primary rRNA binding proteins, it binds directly to 16S rRNA where it nucleates assembly of the body of the 30S subunit. In terms of biological role, with S5 and S12 plays an important role in translational accuracy. The sequence is that of Small ribosomal subunit protein uS4 from Sulfurisphaera tokodaii (strain DSM 16993 / JCM 10545 / NBRC 100140 / 7) (Sulfolobus tokodaii).